Consider the following 266-residue polypeptide: Small ribosomal subunit protein uS3 (266 aa).

The KH type-2 domain occupies 39-107 (VREYLKKKLK…PVHVNIEEIR (69 aa)). The segment at 214-266 (PVVEEVTEDKRPRRNARPGDRRPRRDGEGGAPGARRGGPRRGAGKPEDGKTGE) is disordered. Composition is skewed to basic and acidic residues over residues 230-241 (RPGDRRPRRDGE) and 257-266 (GKPEDGKTGE).

This sequence belongs to the universal ribosomal protein uS3 family. In terms of assembly, part of the 30S ribosomal subunit. Forms a tight complex with proteins S10 and S14.

Binds the lower part of the 30S subunit head. Binds mRNA in the 70S ribosome, positioning it for translation. The polypeptide is Small ribosomal subunit protein uS3 (Burkholderia thailandensis (strain ATCC 700388 / DSM 13276 / CCUG 48851 / CIP 106301 / E264)).